The following is a 391-amino-acid chain: DNA-directed RNA polymerase subunit Rpo1C (391 aa).

This sequence belongs to the RNA polymerase beta' chain family. Part of the RNA polymerase complex.

Its subcellular location is the cytoplasm. It carries out the reaction RNA(n) + a ribonucleoside 5'-triphosphate = RNA(n+1) + diphosphate. In terms of biological role, DNA-dependent RNA polymerase (RNAP) catalyzes the transcription of DNA into RNA using the four ribonucleoside triphosphates as substrates. Forms part of the jaw domain. The protein is DNA-directed RNA polymerase subunit Rpo1C of Thermococcus onnurineus (strain NA1).